A 280-amino-acid chain; its full sequence is Phosphate import ATP-binding protein PstB (280 aa).

The ABC transporter domain occupies 34-275 (IEVKNLNFFY…PARKETEDYI (242 aa)). Residue 66 to 73 (GPSGCGKS) participates in ATP binding.

It belongs to the ABC transporter superfamily. Phosphate importer (TC 3.A.1.7) family. The complex is composed of two ATP-binding proteins (PstB), two transmembrane proteins (PstC and PstA) and a solute-binding protein (PstS).

It is found in the cell inner membrane. It catalyses the reaction phosphate(out) + ATP + H2O = ADP + 2 phosphate(in) + H(+). Its function is as follows. Part of the ABC transporter complex PstSACB involved in phosphate import. Responsible for energy coupling to the transport system. This chain is Phosphate import ATP-binding protein PstB, found in Burkholderia mallei (strain ATCC 23344).